We begin with the raw amino-acid sequence, 195 residues long: Nicotinamide riboside kinase 2 (195 aa).

9–17 contacts ATP; that stretch reads GVTNGGKTT. Positions 16 and 35 each coordinate Mg(2+). D35 serves as the catalytic Proton acceptor. Residues 35–38 and 54–55 each bind substrate; these read DDFF and WD. R130 contacts ATP. Substrate contacts are provided by residues R131 and 136–137; that span reads YM. ATP contacts are provided by residues 134–136 and 174–176; these read RTY and KSP.

The protein belongs to the uridine kinase family. NRK subfamily. Monomer. Interacts with ITGB1 alone or when associated with alpha-7, but not with alpha-5. As to expression, expressed in skeletal muscle (at protein level).

It catalyses the reaction beta-nicotinamide D-riboside + ATP = beta-nicotinamide D-ribonucleotide + ADP + H(+). It carries out the reaction beta-D-ribosylnicotinate + ATP = nicotinate beta-D-ribonucleotide + ADP + H(+). The protein operates within cofactor biosynthesis; NAD(+) biosynthesis. In terms of biological role, catalyzes the phosphorylation of nicotinamide riboside (NR) and nicotinic acid riboside (NaR) to form nicotinamide mononucleotide (NMN) and nicotinic acid mononucleotide (NaMN). Reduces laminin matrix deposition and cell adhesion to laminin, but not to fibronectin. Involved in the regulation of PXN at the protein level and of PXN tyrosine phosphorylation. May play a role in the regulation of terminal myogenesis. This Mus musculus (Mouse) protein is Nicotinamide riboside kinase 2 (Nmrk2).